We begin with the raw amino-acid sequence, 425 residues long: UBX domain-containing protein 4 (425 aa).

The segment at 224–257 (TPIPSLPSTPSSYQNLPSQSLTGESLPTVSNQEK) is disordered. The span at 236-254 (YQNLPSQSLTGESLPTVSN) shows a compositional bias: polar residues. S338 bears the Phosphoserine mark. The region spanning 341 to 390 (PLPSSAIVKFDFGNGKSIVHEFSKDDNIETLRAFVASHLSPEESTSFQLT) is the UBX domain.

The protein localises to the cytoplasm. It localises to the nucleus. Its function is as follows. Involved in CDC48-dependent protein degradation through the ubiquitin/proteasome pathway. This is UBX domain-containing protein 4 (ubx4) from Schizosaccharomyces pombe (strain 972 / ATCC 24843) (Fission yeast).